Consider the following 155-residue polypeptide: MSRRGTAEEKTAKSDPIYRNRLVNMLVNRILKHGKKALAYQIIYRAMKKIQQKTETNPLSVLRQAIRGVTPDIAVKARRVGGSTHQVPIEIGSTQGKALAIRWLLAASRKRPGRDMAFKLSSELVDAAKGSGDAIRKKEETHKMAEANRAFAHFR.

Belongs to the universal ribosomal protein uS7 family. As to quaternary structure, part of the 30S ribosomal subunit.

It is found in the plastid. In terms of biological role, one of the primary rRNA binding proteins, it binds directly to 16S rRNA where it nucleates assembly of the head domain of the 30S subunit. This is Small ribosomal subunit protein uS7c (rps7) from Lathraea clandestina (Purple toothwort).